A 1938-amino-acid polypeptide reads, in one-letter code: Myosin-6 (1938 aa).

Residues 31-80 (DIRTECFVPDDKEEYVKAKIVSREGGKVTAETENGKTVTVKEDQVMQQNP) form the Myosin N-terminal SH3-like domain. The 696-residue stretch at 84 to 779 (DKIEDMAMLT…LLGLLEEMRD (696 aa)) folds into the Myosin motor domain. Lys128 is subject to N6,N6,N6-trimethyllysine. 177-184 (GESGAGKT) contributes to the ATP binding site. Thr378 is modified (phosphothreonine). Position 416 is a phosphoserine (Ser416). 2 actin-binding regions span residues 656-678 (LNKLMTNLRTTHPHFVRCIIPNE) and 758-772 (KFGHTKVFFKAGLLG). The 30-residue stretch at 782 to 811 (LSRIITRIQAQARGQLMRIEFKKMVERRDA) folds into the IQ domain. Calmodulin-binding regions lie at residues 789–806 (IQAQARGQLMRIEFKKMV) and 815–832 (IQWNIRAFMGVKNWPWMK). A coiled-coil region spans residues 842–1938 (KSAETEKEMA…GAKQKMHDEE (1097 aa)). Phosphoserine is present on residues Ser1089 and Ser1138. Tyr1260 carries the phosphotyrosine modification. Ser1270 is modified (phosphoserine). Phosphothreonine occurs at positions 1276 and 1283. Position 1308 is a phosphoserine (Ser1308). Tyr1309 carries the phosphotyrosine modification. The residue at position 1310 (Thr1310) is a Phosphothreonine. Ser1511 carries the post-translational modification Phosphoserine. Phosphothreonine occurs at positions 1514 and 1680. Residues 1907 to 1938 (AEERADIAESQVNKLRAKSRDIGAKQKMHDEE) form a disordered region. Residues 1924–1938 (KSRDIGAKQKMHDEE) are compositionally biased toward basic and acidic residues.

It belongs to the TRAFAC class myosin-kinesin ATPase superfamily. Myosin family. Muscle myosin is a hexameric protein that consists of 2 heavy chain subunits (MHC), 2 alkali light chain subunits (MLC) and 2 regulatory light chain subunits (MLC-2).

The protein resides in the cytoplasm. It localises to the myofibril. Its function is as follows. Muscle contraction. The sequence is that of Myosin-6 (Myh6) from Rattus norvegicus (Rat).